Consider the following 310-residue polypeptide: DDRGK domain-containing protein 1 (310 aa).

A helical transmembrane segment spans residues 1–21 (MAAIIYLAIAAVASILLFVAV). The Cytoplasmic segment spans residues 22 to 310 (KLLSTDTKTE…DSPAEISVNA (289 aa)). 2 disordered regions span residues 38–85 (VGEL…DEYQ) and 110–162 (KAEK…LKEE). A compositionally biased stretch (basic residues) spans 52–70 (PRARARRGLRNKTNRSKTQ). Residues 76–85 (DYDDYDDEYQ) show a composition bias toward acidic residues.

The protein belongs to the DDRGK1 family.

It is found in the endoplasmic reticulum membrane. In terms of biological role, substrate adapter for ufmylation, the covalent attachment of the ubiquitin-like modifier UFM1 to substrate proteins. The chain is DDRGK domain-containing protein 1 from Trichoplax adhaerens (Trichoplax reptans).